The primary structure comprises 1120 residues: Terminal uridylyltransferase 1 (1120 aa).

Disordered stretches follow at residues 1–156 and 196–221; these read MSKY…SAVE and AALINGDPGPLSSAVSSSSSGSPHTP. Over residues 7 to 16 the composition is skewed to polar residues; the sequence is LFNQGTKDGT. A compositionally biased stretch (low complexity) spans 17–59; sequence NASSGSEANSANITSSSAPASSTNTSSPTSSESAVVSPPASTS. Over residues 60–70 the composition is skewed to basic residues; sequence PRRRLIHRRHG. Positions 90–103 are enriched in basic and acidic residues; that stretch reads NEEKHENFISDSVH. The segment covering 118–128 has biased composition (polar residues); sequence LTTSGSETVMS. Composition is skewed to low complexity over residues 134–154 and 207–217; these read AFEAPSPPTASASPPLESTSA and SSAVSSSSSGS. The segment at 222-253 adopts a C2H2-type; atypical zinc-finger fold; the sequence is PRLFTCDMCLQYVSTSYEALEQHALDQHGDAL. Residues Cys227, Cys230, His244, and His249 each coordinate Zn(2+). Residues Ser330 and 341-344 contribute to the UTP site; that span reads SDID. 2 residues coordinate Mg(2+): Asp342 and Asp344. Arg390 contributes to the RNA binding site. Asp548 serves as a coordination point for Mg(2+). UTP-binding positions include 555 to 559, Lys580, Lys584, and 598 to 599; these read GIRNS and SY. Positions 659-697 constitute a PAP-associated domain; it reads GELLLGFFYYYAFEFDWVNHVVSLNRPGITTKASLGWDV. The tract at residues 750–1120 is important for catalytic activity and RNA binding; sequence GMMASSASAA…ARRVLRLLFR (371 aa). The Nucleotide recognition motif (NRM) motif lies at 773-782; it reads IEDPYEENLN. Residues 800–900 are involved in oligomerization; it reads YRGLLSLLKD…LLSDLEAAFL (101 aa). The disordered stretch occupies residues 1047–1076; sequence PSTTTQGEDPLASGTCEQGGVSPSLPTGAP.

It belongs to the DNA polymerase type-B-like family. Homotetramer. Part of a 700kDa complex. Interacts with p45 and p50 RNA ligases. Requires Mg(2+) as cofactor. The cofactor is Mn(2+).

Its subcellular location is the mitochondrion. The enzyme catalyses RNA(n) + UTP = RNA(n)-3'-uridine ribonucleotide + diphosphate. With respect to regulation, zinc-binding is required for catalytic activity. Functionally, terminal uridylyltransferase which is involved in the post-transcriptional editing of mitochondrial RNA, a process involving the addition and deletion of uridine (U) nucleotides in the pre-mRNA. Specifically, catalyzes the addition of Us to the 3'-hydroxyl group of guided RNA (gRNA), with a preference for RNAs terminating in 6 Us, but also can add Us to RNAs terminating in 6 adenines (A), 6 cytosines (C), or 6 guanines (G). Can mediate RNA-independent UTP polymerization in vitro. Can mediate pyrophosphate-dependent degradation of synthetic RNA ending with U residues in vitro. The sequence is that of Terminal uridylyltransferase 1 from Leishmania tarentolae (Sauroleishmania tarentolae).